The sequence spans 367 residues: Carbohydrate sulfotransferase 14 (367 aa).

Over 1–34 the chain is Cytoplasmic; the sequence is MPPRKKEYGIKRASGSLVHFRAPVSATTIRRHSA. A helical; Signal-anchor for type II membrane protein transmembrane segment spans residues 35–55; the sequence is VVPSVLTFAVIVASGGLLLMI. Residues 56–367 are Lumenal-facing; that stretch reads EKGMLNSVQT…PNTTTEYCRH (312 aa). The N-linked (GlcNAc...) asparagine glycan is linked to asparagine 99. 3'-phosphoadenylyl sulfate-binding positions include 144–150 and 202–210; these read PKVACSN and REPMARLLS. N-linked (GlcNAc...) asparagine glycosylation occurs at asparagine 359.

Belongs to the sulfotransferase 2 family.

It localises to the golgi apparatus membrane. Its function is as follows. Catalyzes the transfer of sulfate to position 4 of the N-acetylgalactosamine (GalNAc) residue of dermatan sulfate. This is Carbohydrate sulfotransferase 14 (chst14) from Danio rerio (Zebrafish).